Here is a 545-residue protein sequence, read N- to C-terminus: E3 ubiquitin-protein ligase ipaH9.8 (545 aa).

Residues 1 to 242 are interaction with target proteins; the sequence is MLPINNNFSL…YHGPRIYFSM (242 aa). LRR repeat units lie at residues 57–77, 78–99, 100–117, 118–139, 140–157, 158–179, 182–203, and 205–228; these read NSDE…NLPA, QITL…PVTL, KKLY…VLPP, ALES…PDSL, LTMN…SLPQ, ALKN…SEGN, VVRE…ILNL, and NECS…QRLT. The tract at residues 243–250 is linker; the sequence is SDGQQNTL. The E3 ubiquitin-protein ligase catalytic domain stretch occupies residues 251 to 545; it reads HRPLADAVTA…SENGSQLHHS (295 aa). Positions 253 to 545 constitute an NEL domain; it reads PLADAVTAWF…SENGSQLHHS (293 aa). Cys337 serves as the catalytic Glycyl thioester intermediate.

The protein belongs to the LRR-containing bacterial E3 ligase family. In terms of assembly, also interacts with human and mouse U2AF1 (U2AF35). Post-translationally, ubiquitinated in the presence of host E1 ubiquitin-activating enzyme, E2 ubiquitin-conjugating enzyme and ubiquitin.

Its subcellular location is the secreted. It is found in the host cytoplasm. It localises to the host nucleus. The catalysed reaction is S-ubiquitinyl-[E2 ubiquitin-conjugating enzyme]-L-cysteine + [acceptor protein]-L-lysine = [E2 ubiquitin-conjugating enzyme]-L-cysteine + N(6)-ubiquitinyl-[acceptor protein]-L-lysine.. With respect to regulation, exists in an autoinhibited state in the absence of substrate protein, due to interactions of the leucine-rich repeats with NEL domain. Is activated upon binding to a substrate protein. Its function is as follows. Effector E3 ubiquitin ligase that interferes with host's ubiquitination pathway and modulates the acute inflammatory responses, thus facilitating bacterial colonization within the host cell. Interacts with IKBKG (NEMO) and TNIP1 (ABIN-1), a ubiquitin-binding adapter protein, which results in TNIP1-dependent 'Lys-27'-linked polyubiquitination of IKBKG. Consequently, polyubiquitinated IKBKG undergoes proteasome-dependent degradation, which perturbs NF-kappa-B activation during bacterial infection. Mediates polyubiquitination of host U2AF1, leading to its proteasomal degradation. Catalyzes 'Lys-48'-linked polyubiquitination and subsequent degradation of a subset of host guanylate-binding proteins (GBP1, GBP2, GBP4 and GBP6), thereby suppressing host cell defense. In contrast, host GBP3 and GBP7 are not ubiquitinated by IpaH9.8. Uses UBE2D2 (UBCH5B) as an E2 ubiquitin-conjugating enzyme. This Shigella dysenteriae serotype 1 (strain Sd197) protein is E3 ubiquitin-protein ligase ipaH9.8 (ipaH9.8).